Consider the following 934-residue polypeptide: Pesticidal crystal protein Cry1Aa (934 aa).

It belongs to the delta endotoxin family.

In terms of biological role, promotes colloidosmotic lysis by binding to the midgut epithelial cells of many lepidopteran larvae. The chain is Pesticidal crystal protein Cry1Aa (cry1Aa) from Bacillus thuringiensis subsp. sotto.